The chain runs to 122 residues: Large ribosomal subunit protein bL12 (122 aa).

The protein belongs to the bacterial ribosomal protein bL12 family. Homodimer. Part of the ribosomal stalk of the 50S ribosomal subunit. Forms a multimeric L10(L12)X complex, where L10 forms an elongated spine to which 2 to 4 L12 dimers bind in a sequential fashion. Binds GTP-bound translation factors.

Its function is as follows. Forms part of the ribosomal stalk which helps the ribosome interact with GTP-bound translation factors. Is thus essential for accurate translation. The chain is Large ribosomal subunit protein bL12 from Shewanella loihica (strain ATCC BAA-1088 / PV-4).